The following is a 234-amino-acid chain: Sugar fermentation stimulation protein homolog (234 aa).

It belongs to the SfsA family.

This chain is Sugar fermentation stimulation protein homolog, found in Idiomarina loihiensis (strain ATCC BAA-735 / DSM 15497 / L2-TR).